We begin with the raw amino-acid sequence, 446 residues long: MSTFIGQLVGFAAIVFLVVRYVVPPVRRLMAARQEAVRQQLQDAAAAADRLTESTTAHSKAVEAAKAESKRVVDEAQADAKRITEQLAAQAGLEAERIKSQGSRQVDLLRTQLTRQLRLELGHEAVRQAGELVRNYVADPAQQSATVDRFLDDLDAMAPAAADVQYPLMTKMRSSSRVALVNLTERFTTVAKDLDNKALSALSSELVSVAQMLDREIVVTRYLTVPAEDAGPRVRLIERLLSGKVGDVTLEVLRAAVSERWSANSDLIDALEHLSRQALLEVAERENKVDEVEEQLFRFSRILDVQPRLAILLGDYAVPVEGRVGLLRKVLDSASITVNPIVAALLTQTVELLRGRPAEEAVQFLAEVAVARRGEVVAQVSAAADLSGAQRSRLTEVLSRIYGHPVSVQLQIDTELLGGLLIAVADEVIDGTLASRLAAAEAQLPD.

Residues 1–168 (MSTFIGQLVG…PAAADVQYPL (168 aa)) are ATP synthase subunit b. The chain crosses the membrane as a helical span at residues 4–24 (FIGQLVGFAAIVFLVVRYVVP). The segment at 169–446 (MTKMRSSSRV…LAAAEAQLPD (278 aa)) is ATP synthase subunit delta.

It in the N-terminal section; belongs to the ATPase B chain family. The protein in the C-terminal section; belongs to the ATPase delta chain family. In terms of assembly, F-type ATPases have 2 components, F(1) - the catalytic core - and F(0) - the membrane proton channel. F(1) has five subunits: alpha(3), beta(3), gamma(1), delta(1), epsilon(1). F(0) has three main subunits: a(1), b(2) and c(10-14). The alpha and beta chains form an alternating ring which encloses part of the gamma chain. F(1) is attached to F(0) by a central stalk formed by the gamma and epsilon chains, while a peripheral stalk is formed by the delta and b chains.

It is found in the cell membrane. Functionally, f(1)F(0) ATP synthase produces ATP from ADP in the presence of a proton or sodium gradient. F-type ATPases consist of two structural domains, F(1) containing the extramembraneous catalytic core and F(0) containing the membrane proton channel, linked together by a central stalk and a peripheral stalk. During catalysis, ATP synthesis in the catalytic domain of F(1) is coupled via a rotary mechanism of the central stalk subunits to proton translocation. This fusion protein includes a component of the F(0) channel (subunit b) and of the F(1) subunit (subunit delta). Two copies of subunit b and one of delta together form the peripheral 'stator' stalk which links F(1) to F(0). This is ATP synthase subunit b-delta (atpFH) from Mycobacterium avium (strain 104).